The chain runs to 338 residues: Fructose-1,6-bisphosphatase class 1 1 (338 aa).

4 residues coordinate Mg(2+): Glu91, Asp113, Leu115, and Asp116. Residues 116 to 119 (DGSS), Asn208, and Lys274 each bind substrate. A Mg(2+)-binding site is contributed by Glu280.

The protein belongs to the FBPase class 1 family. As to quaternary structure, homotetramer. Mg(2+) serves as cofactor.

The protein resides in the cytoplasm. The catalysed reaction is beta-D-fructose 1,6-bisphosphate + H2O = beta-D-fructose 6-phosphate + phosphate. It participates in carbohydrate biosynthesis; gluconeogenesis. The sequence is that of Fructose-1,6-bisphosphatase class 1 1 from Cupriavidus necator (strain ATCC 17699 / DSM 428 / KCTC 22496 / NCIMB 10442 / H16 / Stanier 337) (Ralstonia eutropha).